The primary structure comprises 92 residues: Small ribosomal subunit protein uS19c (92 aa).

Belongs to the universal ribosomal protein uS19 family.

The protein resides in the plastid. It localises to the chloroplast. Functionally, protein S19 forms a complex with S13 that binds strongly to the 16S ribosomal RNA. In Porphyra purpurea (Red seaweed), this protein is Small ribosomal subunit protein uS19c (rps19).